The sequence spans 699 residues: DNA topoisomerase 1 (699 aa).

Composition is skewed to basic and acidic residues over residues 1 to 15 (MAKS…KNEL) and 22 to 35 (IELK…ESKG). Residues 1 to 37 (MAKSKVVEKDKKNELDNQSADIELKGQSKNEESKGGK) form a disordered region. Positions 38–146 (KKVIIVESPA…NIITFTEITE (109 aa)) constitute a Toprim domain. Positions 44 and 115 each coordinate Mg(2+). The 424-residue stretch at 160-583 (DMNKVNAQLA…SFLKEFNKDL (424 aa)) folds into the Topo IA-type catalytic domain. Positions 194–199 (SAGRVQ) are interaction with DNA. The active-site O-(5'-phospho-DNA)-tyrosine intermediate is the tyrosine 324. A C4-type zinc finger spans residues 601–624 (CEDCSGNYKLKVGKYGLYLHCPNC). Residues 649–699 (QESQEENGEKNSVQSEESSANSGNRKFYRKRRTSGSKKSSTKSASSKAKKK) form a disordered region. Residues 661–672 (VQSEESSANSGN) are compositionally biased toward polar residues. Basic residues predominate over residues 674–683 (KFYRKRRTSG). Low complexity predominate over residues 684 to 699 (SKKSSTKSASSKAKKK).

The protein belongs to the type IA topoisomerase family. In terms of assembly, monomer. It depends on Mg(2+) as a cofactor.

It carries out the reaction ATP-independent breakage of single-stranded DNA, followed by passage and rejoining.. Functionally, releases the supercoiling and torsional tension of DNA, which is introduced during the DNA replication and transcription, by transiently cleaving and rejoining one strand of the DNA duplex. Introduces a single-strand break via transesterification at a target site in duplex DNA. The scissile phosphodiester is attacked by the catalytic tyrosine of the enzyme, resulting in the formation of a DNA-(5'-phosphotyrosyl)-enzyme intermediate and the expulsion of a 3'-OH DNA strand. The free DNA strand then undergoes passage around the unbroken strand, thus removing DNA supercoils. Finally, in the religation step, the DNA 3'-OH attacks the covalent intermediate to expel the active-site tyrosine and restore the DNA phosphodiester backbone. The polypeptide is DNA topoisomerase 1 (Fervidobacterium islandicum).